The chain runs to 382 residues: Chaperone protein DnaJ (382 aa).

The region spanning 5–70 (DYYEVLGVSR…DKKAAYDRYG (66 aa)) is the J domain. The CR-type zinc finger occupies 141 to 219 (GVQKTINVPA…CHGAGRVEKE (79 aa)). Residues cysteine 154, cysteine 157, cysteine 171, cysteine 174, cysteine 193, cysteine 196, cysteine 207, and cysteine 210 each contribute to the Zn(2+) site. CXXCXGXG motif repeat units follow at residues 154–161 (CDACKGTG), 171–178 (CPTCSGMG), 193–200 (CPTCNGMG), and 207–214 (CKVCHGAG).

The protein belongs to the DnaJ family. As to quaternary structure, homodimer. It depends on Zn(2+) as a cofactor.

The protein localises to the cytoplasm. In terms of biological role, participates actively in the response to hyperosmotic and heat shock by preventing the aggregation of stress-denatured proteins and by disaggregating proteins, also in an autonomous, DnaK-independent fashion. Unfolded proteins bind initially to DnaJ; upon interaction with the DnaJ-bound protein, DnaK hydrolyzes its bound ATP, resulting in the formation of a stable complex. GrpE releases ADP from DnaK; ATP binding to DnaK triggers the release of the substrate protein, thus completing the reaction cycle. Several rounds of ATP-dependent interactions between DnaJ, DnaK and GrpE are required for fully efficient folding. Also involved, together with DnaK and GrpE, in the DNA replication of plasmids through activation of initiation proteins. This chain is Chaperone protein DnaJ, found in Cereibacter sphaeroides (strain ATCC 17023 / DSM 158 / JCM 6121 / CCUG 31486 / LMG 2827 / NBRC 12203 / NCIMB 8253 / ATH 2.4.1.) (Rhodobacter sphaeroides).